We begin with the raw amino-acid sequence, 195 residues long: Sec-independent protein translocase protein TatB (195 aa).

A helical transmembrane segment spans residues phenylalanine 2–glycine 22. The span at valine 103–lysine 125 shows a compositional bias: basic and acidic residues. The interval valine 103 to threonine 195 is disordered. Composition is skewed to polar residues over residues serine 127–alanine 139 and valine 146–serine 155.

The protein belongs to the TatB family. The Tat system comprises two distinct complexes: a TatABC complex, containing multiple copies of TatA, TatB and TatC subunits, and a separate TatA complex, containing only TatA subunits. Substrates initially bind to the TatABC complex, which probably triggers association of the separate TatA complex to form the active translocon.

It localises to the cell membrane. Functionally, part of the twin-arginine translocation (Tat) system that transports large folded proteins containing a characteristic twin-arginine motif in their signal peptide across membranes. Together with TatC, TatB is part of a receptor directly interacting with Tat signal peptides. TatB may form an oligomeric binding site that transiently accommodates folded Tat precursor proteins before their translocation. This chain is Sec-independent protein translocase protein TatB, found in Corynebacterium jeikeium (strain K411).